Here is a 63-residue protein sequence, read N- to C-terminus: Large ribosomal subunit protein bL28 (63 aa).

It belongs to the bacterial ribosomal protein bL28 family.

This is Large ribosomal subunit protein bL28 from Treponema denticola (strain ATCC 35405 / DSM 14222 / CIP 103919 / JCM 8153 / KCTC 15104).